Here is a 524-residue protein sequence, read N- to C-terminus: Bifunctional purine biosynthesis protein PurH (524 aa).

In terms of domain architecture, MGS-like spans 1 to 145; sequence MIKQALLSVS…KNHRDVTVIV (145 aa).

Belongs to the PurH family.

It carries out the reaction (6R)-10-formyltetrahydrofolate + 5-amino-1-(5-phospho-beta-D-ribosyl)imidazole-4-carboxamide = 5-formamido-1-(5-phospho-D-ribosyl)imidazole-4-carboxamide + (6S)-5,6,7,8-tetrahydrofolate. It catalyses the reaction IMP + H2O = 5-formamido-1-(5-phospho-D-ribosyl)imidazole-4-carboxamide. Its pathway is purine metabolism; IMP biosynthesis via de novo pathway; 5-formamido-1-(5-phospho-D-ribosyl)imidazole-4-carboxamide from 5-amino-1-(5-phospho-D-ribosyl)imidazole-4-carboxamide (10-formyl THF route): step 1/1. It participates in purine metabolism; IMP biosynthesis via de novo pathway; IMP from 5-formamido-1-(5-phospho-D-ribosyl)imidazole-4-carboxamide: step 1/1. The protein is Bifunctional purine biosynthesis protein PurH of Cupriavidus taiwanensis (strain DSM 17343 / BCRC 17206 / CCUG 44338 / CIP 107171 / LMG 19424 / R1) (Ralstonia taiwanensis (strain LMG 19424)).